We begin with the raw amino-acid sequence, 631 residues long: 1-deoxy-D-xylulose-5-phosphate synthase (631 aa).

Residues histidine 78 and alanine 119–serine 121 contribute to the thiamine diphosphate site. A Mg(2+)-binding site is contributed by aspartate 150. Thiamine diphosphate is bound by residues glycine 151–alanine 152, asparagine 179, tyrosine 286, and glutamate 368. Mg(2+) is bound at residue asparagine 179.

It belongs to the transketolase family. DXPS subfamily. In terms of assembly, homodimer. Mg(2+) serves as cofactor. Requires thiamine diphosphate as cofactor.

It carries out the reaction D-glyceraldehyde 3-phosphate + pyruvate + H(+) = 1-deoxy-D-xylulose 5-phosphate + CO2. It participates in metabolic intermediate biosynthesis; 1-deoxy-D-xylulose 5-phosphate biosynthesis; 1-deoxy-D-xylulose 5-phosphate from D-glyceraldehyde 3-phosphate and pyruvate: step 1/1. Catalyzes the acyloin condensation reaction between C atoms 2 and 3 of pyruvate and glyceraldehyde 3-phosphate to yield 1-deoxy-D-xylulose-5-phosphate (DXP). This is 1-deoxy-D-xylulose-5-phosphate synthase from Verminephrobacter eiseniae (strain EF01-2).